Consider the following 156-residue polypeptide: Small ribosomal subunit protein uS7 (156 aa).

It belongs to the universal ribosomal protein uS7 family. Part of the 30S ribosomal subunit. Contacts proteins S9 and S11.

Its function is as follows. One of the primary rRNA binding proteins, it binds directly to 16S rRNA where it nucleates assembly of the head domain of the 30S subunit. Is located at the subunit interface close to the decoding center, probably blocks exit of the E-site tRNA. This is Small ribosomal subunit protein uS7 from Cellvibrio japonicus (strain Ueda107) (Pseudomonas fluorescens subsp. cellulosa).